Reading from the N-terminus, the 82-residue chain is Small ribosomal subunit protein uS15 (82 aa).

It belongs to the universal ribosomal protein uS15 family. Part of the 30S ribosomal subunit. Forms a bridge to the 50S subunit in the 70S ribosome, contacting the 23S rRNA.

Its function is as follows. One of the primary rRNA binding proteins, it binds directly to 16S rRNA where it helps nucleate assembly of the platform of the 30S subunit by binding and bridging several RNA helices of the 16S rRNA. Forms an intersubunit bridge (bridge B4) with the 23S rRNA of the 50S subunit in the ribosome. In Pelagibacter ubique (strain HTCC1062), this protein is Small ribosomal subunit protein uS15.